The sequence spans 673 residues: Sodium/myo-inositol cotransporter 2 (673 aa).

Residues 1–27 (MESTTSSPQPPPSDALEAFPQKSMEPA) lie on the Extracellular side of the membrane. The chain crosses the membrane as a helical span at residues 28–48 (DIVVLVLYFLFVLAVGLWSTV). Over 49–56 (RTKRDTVK) the chain is Cytoplasmic. A helical transmembrane segment spans residues 57–77 (GYFLAGGDMVWWPVGASLFAS). A topological domain (extracellular) is located at residue N78. A helical membrane pass occupies residues 79 to 99 (VGSGHFIGLAGSGAAVGISVA). Topologically, residues 100–102 (AYE) are cytoplasmic. The chain crosses the membrane as a helical span at residues 103 to 123 (LNGLFSVLMLAWIFLPIYIAG). Topologically, residues 124 to 180 (QVTTMPEYLKRRFGGSRIPITLASIYPSTHSLTILQVDMYAGAIFIQQSLHLDLYLA) are extracellular. Residues 181 to 201 (IVGLLAVTALYTVAGGLAAVI) traverse the membrane as a helical segment. Residues 202 to 208 (YTDALQT) lie on the Cytoplasmic side of the membrane. Residues 209–229 (VIMLIGAFILMGYSFAAVGGM) traverse the membrane as a helical segment. Over 230 to 272 (EGLKDQYFLALASNRSENSSCGLPREDAFHIFRDPLTSDLPWP) the chain is Extracellular. Residues 273 to 293 (GILFGMSIPSLWYWCTDQVIV) traverse the membrane as a helical segment. Residues 294 to 308 (QRSLAAKNLSHAKGG) are Cytoplasmic-facing. The helical transmembrane segment at 309 to 329 (SLMAAYLKVLPLFLMVFPGMV) threads the bilayer. At 330 to 375 (SRILFPDQVACAHPDICQRVCSNPSGCSDIAYPKLVLELLPTGLRG) the chain is on the extracellular side. Residues 376 to 396 (LMMAVMVAALMSSLTSIFNSA) traverse the membrane as a helical segment. At 397–418 (STIFTMDLWHHIRPRASERELM) the chain is on the cytoplasmic side. A helical transmembrane segment spans residues 419-439 (IVGRVFVLALVLVSILWIPVV). Topologically, residues 440–446 (QASQGGQ) are extracellular. Residues 447 to 467 (LFIYIQSISSYLQPPVAVVFI) form a helical membrane-spanning segment. The Cytoplasmic segment spans residues 468-479 (MGCFWKRTNEKG). The helical transmembrane segment at 480 to 500 (AFSGLILGLLLGLVRLILDFV) threads the bilayer. Residues 501–521 (YVQPRCDQPDDRPAVVKDVHY) lie on the Extracellular side of the membrane. A helical transmembrane segment spans residues 522 to 542 (LYFSMILSSTTLITVFTVSWF). The Cytoplasmic portion of the chain corresponds to 543 to 652 (TETPSKEMVS…SLEENPLVKT (110 aa)). The chain crosses the membrane as a helical span at residues 653–673 (LLDVNCIVCISCAIFLWGYFA).

It belongs to the sodium:solute symporter (SSF) (TC 2.A.21) family. Expressed in kidney and small intestine.

It localises to the membrane. The protein localises to the apical cell membrane. The catalysed reaction is myo-inositol(out) + 2 Na(+)(out) = myo-inositol(in) + 2 Na(+)(in). The enzyme catalyses 1D-chiro-inositol(out) + 2 Na(+)(out) = 1D-chiro-inositol(in) + 2 Na(+)(in). It carries out the reaction D-glucose(out) + 2 Na(+)(out) = D-glucose(in) + 2 Na(+)(in). It catalyses the reaction D-xylose(out) + 2 Na(+)(out) = D-xylose(in) + 2 Na(+)(in). MI transport activity inhibited by D-chiro-inositol (DCI), phlorizin (Pz) and sodium (Na(+)). Insulin increases D-chiro-inositol uptake. Involved in the sodium-dependent cotransport of myo-inositol (MI) with a Na(+):MI stoichiometry of 2:1. Exclusively responsible for apical MI transport and absorption in intestine. Can also transport D-chiro-inositol (DCI) but not L-fucose. Exhibits stereospecific cotransport of both D-glucose and D-xylose. May induce apoptosis through the TNF-alpha, PDCD1 pathway. May play a role in the regulation of MI concentration in serum, involving reabsorption in at least the proximal tubule of the kidney. The chain is Sodium/myo-inositol cotransporter 2 from Rattus norvegicus (Rat).